Consider the following 249-residue polypeptide: tRNA (guanine-N(1)-)-methyltransferase (249 aa).

S-adenosyl-L-methionine is bound by residues Gly-113 and 133 to 138 (IGDYVL).

This sequence belongs to the RNA methyltransferase TrmD family. As to quaternary structure, homodimer.

The protein localises to the cytoplasm. The enzyme catalyses guanosine(37) in tRNA + S-adenosyl-L-methionine = N(1)-methylguanosine(37) in tRNA + S-adenosyl-L-homocysteine + H(+). Its function is as follows. Specifically methylates guanosine-37 in various tRNAs. This is tRNA (guanine-N(1)-)-methyltransferase from Aeromonas hydrophila subsp. hydrophila (strain ATCC 7966 / DSM 30187 / BCRC 13018 / CCUG 14551 / JCM 1027 / KCTC 2358 / NCIMB 9240 / NCTC 8049).